A 305-amino-acid polypeptide reads, in one-letter code: 2-oxoacid:ferredoxin oxidoreductase subunit beta (305 aa).

[4Fe-4S] cluster-binding residues include Cys-12, Cys-15, and Cys-46. Thiamine diphosphate contacts are provided by residues 44-47 (IGCS) and His-65. Asp-90 provides a ligand contact to Mg(2+). 91 to 92 (GD) serves as a coordination point for thiamine diphosphate. Asn-118 and Val-120 together coordinate Mg(2+). 122–123 (GL) provides a ligand contact to thiamine diphosphate. Cys-197 is a binding site for [4Fe-4S] cluster.

In terms of assembly, heterodimer composed of an alpha and a beta subunit. It depends on [4Fe-4S] cluster as a cofactor. Thiamine diphosphate serves as cofactor. Requires Mg(2+) as cofactor.

The protein resides in the cytoplasm. The enzyme catalyses a 2-oxocarboxylate + 2 oxidized [2Fe-2S]-[ferredoxin] + CoA = an acyl-CoA + 2 reduced [2Fe-2S]-[ferredoxin] + CO2 + H(+). In terms of biological role, catalyzes the coenzyme A-dependent oxidative decarboxylation of different 2-oxoacids such as 2-oxoglutarate, pyruvate and 2-oxobutyrate to form their CoA derivatives. The polypeptide is 2-oxoacid:ferredoxin oxidoreductase subunit beta (Sulfolobus sp).